The sequence spans 396 residues: Phosphopentomutase (396 aa).

Asp-13, Asp-288, His-293, Asp-329, His-330, and His-341 together coordinate Mn(2+).

This sequence belongs to the phosphopentomutase family. It depends on Mn(2+) as a cofactor.

Its subcellular location is the cytoplasm. The catalysed reaction is 2-deoxy-alpha-D-ribose 1-phosphate = 2-deoxy-D-ribose 5-phosphate. It carries out the reaction alpha-D-ribose 1-phosphate = D-ribose 5-phosphate. It functions in the pathway carbohydrate degradation; 2-deoxy-D-ribose 1-phosphate degradation; D-glyceraldehyde 3-phosphate and acetaldehyde from 2-deoxy-alpha-D-ribose 1-phosphate: step 1/2. In terms of biological role, isomerase that catalyzes the conversion of deoxy-ribose 1-phosphate (dRib-1-P) and ribose 1-phosphate (Rib-1-P) to deoxy-ribose 5-phosphate (dRib-5-P) and ribose 5-phosphate (Rib-5-P), respectively. In Clostridium perfringens (strain ATCC 13124 / DSM 756 / JCM 1290 / NCIMB 6125 / NCTC 8237 / Type A), this protein is Phosphopentomutase.